The sequence spans 468 residues: PTS system mannitol-specific EIICB component (468 aa).

Topologically, residues 1 to 25 are cytoplasmic; that stretch reads MNNQPSFRARVQKFGSFLSGMIMPN. Positions 14–344 constitute a PTS EIIC type-2 domain; that stretch reads FGSFLSGMIM…ILKTSKATAE (331 aa). A helical membrane pass occupies residues 26–47; the sequence is IGAFIAWGLITALFIPTGWWPN. The Extracellular segment spans residues 48 to 51; the sequence is EQLA. A helical transmembrane segment spans residues 52–72; that stretch reads ELVGPMITYLLPLLIGYTGGK. Residues 73 to 135 are Cytoplasmic-facing; it reads MIYDVRGGVV…SGFEMLVNNF (63 aa). Residues 136–157 form a helical membrane-spanning segment; sequence SAGILAAILAIVAFLGIGPVVV. Over 158-166 the chain is Extracellular; sequence SFSNVLASG. A helical membrane pass occupies residues 167–187; that stretch reads VEVIIGAGLLPLASIFIEPAK. Topologically, residues 188-274 are cytoplasmic; sequence VLFLNNAINH…ILMKPTLILA (87 aa). Residues 275 to 294 traverse the membrane as a helical segment; that stretch reads VIAGGMSGVFTFVLFNAGLV. The Extracellular segment spans residues 295–314; that stretch reads AVPSPGSIFALLAMTPRGEY. Residues 315–336 form a helical membrane-spanning segment; it reads AGVLAGVIIATVVSFVIASIIL. Topologically, residues 337–468 are cytoplasmic; the sequence is KTSKATAEDL…YDELVNRLKS (132 aa). The PTS EIIB type-2 domain maps to 380–468; that stretch reads NKIIFACDAG…YDELVNRLKS (89 aa). C386 acts as the Phosphocysteine intermediate; for EIIB activity in catalysis. Residue C386 is modified to Phosphocysteine; by EIIA.

In terms of assembly, homodimer.

It localises to the cell membrane. The enzyme catalyses D-mannitol(out) + N(pros)-phospho-L-histidyl-[protein] = D-mannitol 1-phosphate(in) + L-histidyl-[protein]. Its function is as follows. The phosphoenolpyruvate-dependent sugar phosphotransferase system (sugar PTS), a major carbohydrate active transport system, catalyzes the phosphorylation of incoming sugar substrates concomitantly with their translocation across the cell membrane. The enzyme II CmtAB PTS system is involved in D-mannitol transport. This is PTS system mannitol-specific EIICB component (mtlA) from Halalkalibacterium halodurans (strain ATCC BAA-125 / DSM 18197 / FERM 7344 / JCM 9153 / C-125) (Bacillus halodurans).